The following is a 172-amino-acid chain: Phosphopantetheine adenylyltransferase (172 aa).

Residue threonine 14 participates in substrate binding. Residues 14 to 15 (TF) and histidine 22 each bind ATP. 3 residues coordinate substrate: lysine 46, leucine 78, and arginine 92. Residues 93–95 (GLR), glutamate 103, and 128–134 (WLYISST) contribute to the ATP site.

Belongs to the bacterial CoaD family. Homohexamer. Mg(2+) serves as cofactor.

The protein localises to the cytoplasm. The enzyme catalyses (R)-4'-phosphopantetheine + ATP + H(+) = 3'-dephospho-CoA + diphosphate. Its pathway is cofactor biosynthesis; coenzyme A biosynthesis; CoA from (R)-pantothenate: step 4/5. In terms of biological role, reversibly transfers an adenylyl group from ATP to 4'-phosphopantetheine, yielding dephospho-CoA (dPCoA) and pyrophosphate. The sequence is that of Phosphopantetheine adenylyltransferase from Lawsonia intracellularis (strain PHE/MN1-00).